The sequence spans 399 residues: Homeobox protein ceh-39 (399 aa).

2 disordered regions span residues 32-91 (PEPA…GDTE) and 158-187 (AKKS…RPAS). Residues 60–79 (SSMCGSSSSSSSSSYSSGSS) are compositionally biased toward low complexity. Positions 205 to 291 (NRQIGDDEEL…VRRALCFMKK (87 aa)) form a DNA-binding region, CUT. A DNA-binding region (homeobox) is located at residues 315-374 (SDERIRRFTFTQTQLDSLHTVFQQQDRPNREMQQALSATLKLNRSTVGNFFMNARRRLPK).

This sequence belongs to the CUT homeobox family. In terms of tissue distribution, expressed in hermaphrodite gonads.

Its subcellular location is the nucleus. It is found in the chromosome. Functionally, transcriptional regulator which is involved in the sex determination and X chromosome dosage compensation pathways. Directly binds to 5'-ATTGAT-3' sites in the promoter of sex-determining factor xol-1 to negatively regulate its expression and promote hermaphrodite development. Associates with condensed DNA during mitosis. This is Homeobox protein ceh-39 from Caenorhabditis elegans.